A 261-amino-acid polypeptide reads, in one-letter code: tRNA U34 carboxymethyltransferase (261 aa).

Residues Lys25, Trp39, Lys44, Gly63, 114–115, Tyr135, and Arg250 each bind carboxy-S-adenosyl-L-methionine; that span reads VE.

It belongs to the class I-like SAM-binding methyltransferase superfamily. CmoB family. Homotetramer.

The catalysed reaction is carboxy-S-adenosyl-L-methionine + 5-hydroxyuridine(34) in tRNA = 5-carboxymethoxyuridine(34) in tRNA + S-adenosyl-L-homocysteine + H(+). Functionally, catalyzes carboxymethyl transfer from carboxy-S-adenosyl-L-methionine (Cx-SAM) to 5-hydroxyuridine (ho5U) to form 5-carboxymethoxyuridine (cmo5U) at position 34 in tRNAs. This chain is tRNA U34 carboxymethyltransferase, found in Helicobacter pylori (strain G27).